Reading from the N-terminus, the 30-residue chain is Nattererin-2 (30 aa).

In terms of tissue distribution, expressed by the skin glands.

The protein resides in the secreted. Functionally, probably has antibacterial activity. The chain is Nattererin-2 from Physalaemus nattereri (Cuyaba dwarf frog).